Consider the following 363-residue polypeptide: Dioxygenase sphC (363 aa).

Fe cation contacts are provided by H183, D185, and H259.

This sequence belongs to the PhyH family. In terms of assembly, homodimer. Fe cation is required as a cofactor.

It carries out the reaction sphingofungin B1 + 2-oxoglutarate + O2 = sphingofungin B + succinate + CO2. It functions in the pathway secondary metabolite biosynthesis. Functionally, dioxygenase; part of the gene cluster that mediates the biosynthesis of sphingofungins, bioactive molecules acting as sphingolipid inhibitors via inhibiting serine palmitoyl transferase (SPT). Within the pathway, sphC catalyzes the hydrolxylation at C-4 to convert sphingofungin B1 into sphingofungin B as well as presphingofungin into sphingofungin B2. Sphingofungin biosynthesis starts with the PKS sphB that produces an C18 polyketide precursor 3-hydroxyoctadeca-4,10-dienoyl-ACP containing one delta-6 desaturation and one delta-12 desaturation. The aminoacyl transferase sphA uses the sphB product to produce 3-keto-presphingofungin by adding an aminomalonate molecule. SphF then reduces the C-3 ketone of 3-keto-presphingofungin which leads to presphingofungin. The cytochrome P450 monooxygenase sphH converts presphingofungin into sphingofungin B1 which is further converted to sphingofungin B by the dioxygenase sphC. SphC is also able to convert presphingofungin into sphingofungin B2. The acetyltransferase sphE acetylates sphingofungin B to produce sphingofungin C, but can also convert sphingofungin B1 into sphingofungin C1 and sphingofungin B2 into sphingofungin C2. Finally, sphingofungin C can be spontaneously converted into sphingofungin D. In Aspergillus fumigatus (strain CBS 144.89 / FGSC A1163 / CEA10) (Neosartorya fumigata), this protein is Dioxygenase sphC.